The following is a 156-amino-acid chain: Snaclec stejaggregin-B subunit alpha (156 aa).

The signal sequence occupies residues 1 to 23 (MGRFISVSFGLLVVFLSLSGTGA). 3 disulfides stabilise this stretch: cysteine 25/cysteine 36, cysteine 53/cysteine 150, and cysteine 125/cysteine 142. Residues 32–151 (FKQYCYQIIK…CEQKHLFMCK (120 aa)) enclose the C-type lectin domain.

It belongs to the snaclec family. Heteromultimer; disulfide-linked. In terms of tissue distribution, expressed by the venom gland.

The protein localises to the secreted. Functionally, interferes with one step of hemostasis (modulation of platelet aggregation, or coagulation cascade, for example). The chain is Snaclec stejaggregin-B subunit alpha from Trimeresurus stejnegeri (Chinese green tree viper).